We begin with the raw amino-acid sequence, 441 residues long: Zinc finger and BTB domain-containing protein 8A (441 aa).

The BTB domain maps to 24-92 (CDCSILVEGK…VYSGKLSLTG (69 aa)). 2 stretches are compositionally biased toward polar residues: residues 143–170 (NGVE…SPEQ) and 178–196 (KSWN…TQQP). Positions 143-251 (NGVERSSFYS…QSEEQAQIDA (109 aa)) are disordered. S161 and S167 each carry phosphoserine. Glycyl lysine isopeptide (Lys-Gly) (interchain with G-Cter in SUMO2) cross-links involve residues K178, K182, K191, and K199. The span at 198–208 (AKHEPRKESIK) shows a compositional bias: basic and acidic residues. The segment covering 234–243 (SDSSSHVSQS) has biased composition (low complexity). 2 consecutive C2H2-type zinc fingers follow at residues 282-304 (FKCP…LRCH) and 310-333 (YPCQ…RTIH). Residue K437 forms a Glycyl lysine isopeptide (Lys-Gly) (interchain with G-Cter in SUMO2) linkage.

The protein localises to the nucleus. Its function is as follows. May be involved in transcriptional regulation. The sequence is that of Zinc finger and BTB domain-containing protein 8A (ZBTB8A) from Homo sapiens (Human).